Consider the following 142-residue polypeptide: Hemoglobin subunit alpha-1 (142 aa).

The 141-residue stretch at 2–142 folds into the Globin domain; it reads VLSPADKTNV…VSTVLTSKYR (141 aa). Residue His-59 participates in O2 binding. His-88 is a heme b binding site.

Belongs to the globin family. Heterotetramer of two alpha chains and two beta chains. In terms of tissue distribution, red blood cells.

Functionally, involved in oxygen transport from the lung to the various peripheral tissues. In terms of biological role, hemopressin acts as an antagonist peptide of the cannabinoid receptor CNR1. Hemopressin-binding efficiently blocks cannabinoid receptor CNR1 and subsequent signaling. The polypeptide is Hemoglobin subunit alpha-1 (HBA1) (Hylobates lar (Lar gibbon)).